We begin with the raw amino-acid sequence, 534 residues long: NEDD8-activating enzyme E1 regulatory subunit (534 aa).

Ala2 carries the N-acetylalanine modification. Residues Lys6 and Lys341 each carry the N6-acetyllysine modification. Residues 331–344 (DMIADSNKYIKLQN) are interaction with UBA3.

It belongs to the ubiquitin-activating E1 family. ULA1 subfamily. Heterodimer of UBA3 and NAE1. The complex binds NEDD8 and UBE2M. Binds APP and TP53BP2. Post-translationally, ubiquitinated by TRIP12, leading to its degradation by the proteasome. Expressed throughout the brain. In hippocampus, strongly expressed in granule cells and in the pyramidal cell layer. Strongly expressed in the piriform cortex. In the cerebellum, expressed only in Purkinje cells.

The protein resides in the cell membrane. It participates in protein modification; protein neddylation. Binding of TP53BP2 to the regulatory subunit NAE1 decreases neddylation activity. Its function is as follows. Regulatory subunit of the dimeric UBA3-NAE1 E1 enzyme. E1 activates NEDD8 by first adenylating its C-terminal glycine residue with ATP, thereafter linking this residue to the side chain of the catalytic cysteine, yielding a NEDD8-UBA3 thioester and free AMP. E1 finally transfers NEDD8 to the catalytic cysteine of UBE2M. Necessary for cell cycle progression through the S-M checkpoint. Overexpression of NAE1 causes apoptosis through deregulation of NEDD8 conjugation. The covalent attachment of NEDD8 to target proteins is known as 'neddylation' and the process is involved in the regulation of cell growth, viability and development. The polypeptide is NEDD8-activating enzyme E1 regulatory subunit (Nae1) (Rattus norvegicus (Rat)).